The primary structure comprises 166 residues: Interferon gamma (166 aa).

An N-terminal signal peptide occupies residues 1-23 (MNYTTICLAFQLCVIFCSSGYYC). A Pyrrolidone carboxylic acid modification is found at Q24. N39, N106, and N107 each carry an N-linked (GlcNAc...) asparagine glycan.

It belongs to the type II (or gamma) interferon family. In terms of assembly, homodimer. Interacts with IFNGR1 (via extracellular domain); this interaction promotes IFNGR1 dimerization.

The protein resides in the secreted. Functionally, type II interferon produced by immune cells such as T-cells and NK cells that plays crucial roles in antimicrobial, antiviral, and antitumor responses by activating effector immune cells and enhancing antigen presentation. Primarily signals through the JAK-STAT pathway after interaction with its receptor IFNGR1 to affect gene regulation. Upon IFNG binding, IFNGR1 intracellular domain opens out to allow association of downstream signaling components JAK2, JAK1 and STAT1, leading to STAT1 activation, nuclear translocation and transcription of IFNG-regulated genes. Many of the induced genes are transcription factors such as IRF1 that are able to further drive regulation of a next wave of transcription. Plays a role in class I antigen presentation pathway by inducing a replacement of catalytic proteasome subunits with immunoproteasome subunits. In turn, increases the quantity, quality, and repertoire of peptides for class I MHC loading. Increases the efficiency of peptide generation also by inducing the expression of activator PA28 that associates with the proteasome and alters its proteolytic cleavage preference. Up-regulates as well MHC II complexes on the cell surface by promoting expression of several key molecules such as cathepsins B/CTSB, H/CTSH, and L/CTSL. Participates in the regulation of hematopoietic stem cells during development and under homeostatic conditions by affecting their development, quiescence, and differentiation. The protein is Interferon gamma (IFNG) of Mustela putorius furo (European domestic ferret).